The primary structure comprises 246 residues: Dihydromethanopterin reductase (acceptor) (246 aa).

4Fe-4S ferredoxin-type domains are found at residues 150 to 178 (LPYA…VKRD) and 179 to 208 (NFVE…EGKE). [4Fe-4S] cluster contacts are provided by C159, C162, C165, C169, C188, C191, C194, and C198.

In terms of assembly, homodimer. Requires [4Fe-4S] cluster as cofactor.

It carries out the reaction 5,6,7,8-tetrahydromethanopterin + A = 7,8-dihydromethanopterin + AH2. The protein operates within cofactor biosynthesis; 5,6,7,8-tetrahydromethanopterin biosynthesis. Functionally, involved in the biosynthesis of tetrahydromethanopterin, a coenzyme used in methanogenesis. Catalyzes the reduction of dihydromethanopterin (H(2)MPT) to tetrahydromethanopterin (H(4)MPT). Ferredoxin may serve as an electron donor. In Methanocaldococcus jannaschii (strain ATCC 43067 / DSM 2661 / JAL-1 / JCM 10045 / NBRC 100440) (Methanococcus jannaschii), this protein is Dihydromethanopterin reductase (acceptor).